We begin with the raw amino-acid sequence, 79 residues long: Conotoxin MIVA (79 aa).

The N-terminal stretch at 1–21 (MGMRMMFTVFLLVVLATTVVS) is a signal peptide. Residues 22-38 (IPSDRASDGRNAVVHER) constitute a propeptide that is removed on maturation. Proline 40 is modified (4-hydroxyproline). Glutamate 41 is subject to 4-carboxyglutamate. O-linked (HexNAc...) threonine glycans are attached at residues threonine 45 and threonine 47. 6 positions are modified to 4-hydroxyproline: proline 55, proline 60, proline 61, proline 69, proline 70, and proline 74. Proline 74 carries the proline amide modification. A propeptide spanning residues 75–79 (GRRND) is cleaved from the precursor.

O-linked glycan consists of Hex4-HexNAc2 hexasaccharide. Post-translationally, contains 3 disulfide bonds. In terms of tissue distribution, expressed by the venom duct.

The protein localises to the secreted. Its function is as follows. Probable neurotoxin with ion channel inhibitor activity. The polypeptide is Conotoxin MIVA (Conus magus (Magical cone)).